The chain runs to 269 residues: Novel plant SNARE 13 (269 aa).

The Cytoplasmic portion of the chain corresponds to 1–217 (MASNLPMSPQ…IGRQVATDKC (217 aa)). Positions 33 to 94 (DKIKDSTRQS…KQSMIKELNS (62 aa)) form a coiled coil. Ser74 is subject to Phosphoserine. Residues 146 to 208 (MKRMDETDQA…KKASQLVKEI (63 aa)) enclose the t-SNARE coiled-coil homology domain. Residues 218-238 (IMGFLFLIVCGVVAIIIVKIV) form a helical; Anchor for type IV membrane protein membrane-spanning segment. The Vesicular segment spans residues 239 to 269 (NPNNKDIRDIPGLAPPAQSRKLLYLRNQDYM).

Belongs to the novel plant SNARE family.

It is found in the membrane. In terms of biological role, vesicle trafficking protein that functions in the secretory pathway. In Arabidopsis thaliana (Mouse-ear cress), this protein is Novel plant SNARE 13 (NPSN13).